The sequence spans 502 residues: CBL-interacting serine/threonine-protein kinase 13 (502 aa).

The interval 32-51 is disordered; that stretch reads TNKETSTPESPRSPRTPQGS. Low complexity predominate over residues 35–48; that stretch reads ETSTPESPRSPRTP. Residues 57–311 form the Protein kinase domain; it reads YEIGKLLGHG…IPEIMKHRWF (255 aa). Residues 63 to 71 and Lys-86 contribute to the ATP site; that span reads LGHGSFAKV. Catalysis depends on Asp-179, which acts as the Proton acceptor. The interval 197–226 is activation loop; the sequence is DFGLSVVSEQLKQEGICQTFCGTPAYLAPE. Ser-201 carries the phosphoserine modification. Position 215 is a phosphothreonine (Thr-215). Residues 331-359 are disordered; sequence DDDNDDDDSSSLSSGRSSTASEGDAEFDI. Residues 340–352 show a composition bias toward low complexity; it reads SSLSSGRSSTASE. Positions 366-387 constitute an NAF domain; sequence PRPASLNAFDILSFSDLSGLFE. Residues 390-419 are PPI; the sequence is GQGARFVSAAPMTKIISKLEEIAKEVKFMV.

The protein belongs to the protein kinase superfamily. CAMK Ser/Thr protein kinase family. SNF1 subfamily. As to quaternary structure, interacts with CBL2 and CBL3. Requires Mn(2+) as cofactor.

The catalysed reaction is L-seryl-[protein] + ATP = O-phospho-L-seryl-[protein] + ADP + H(+). It catalyses the reaction L-threonyl-[protein] + ATP = O-phospho-L-threonyl-[protein] + ADP + H(+). Its function is as follows. CIPK serine-threonine protein kinases interact with CBL proteins. Binding of a CBL protein to the regulatory NAF domain of CIPK protein lead to the activation of the kinase in a calcium-dependent manner. This is CBL-interacting serine/threonine-protein kinase 13 (CIPK13) from Arabidopsis thaliana (Mouse-ear cress).